The sequence spans 468 residues: Alpha-N-acetylgalactosaminidase (468 aa).

The tat-type signal signal peptide spans 1–30 (MENTRRNFLKKVTAAGIGAAGLAVTDQAMA). Residues 62–63 (SR), Asp84, 133–136 (WEWH), 154–155 (EV), and Asn183 each bind NAD(+). Tyr212 is a substrate binding site. NAD(+) is bound at residue 243–247 (AEAQW). Substrate-binding positions include Arg248, 260–263 (YPTH), and Tyr342. NAD(+) is bound at residue Tyr260.

This sequence belongs to the Gfo/Idh/MocA family. Glycosyl hydrolase 109 subfamily. It depends on NAD(+) as a cofactor. Predicted to be exported by the Tat system. The position of the signal peptide cleavage has not been experimentally proven.

The catalysed reaction is Cleavage of non-reducing alpha-(1-&gt;3)-N-acetylgalactosamine residues from human blood group A and AB mucin glycoproteins, Forssman hapten and blood group A lacto series glycolipids.. In terms of biological role, glycosidase that has specific alpha-N-acetylgalactosaminidase activity. The chain is Alpha-N-acetylgalactosaminidase (nagA) from Tannerella forsythia (Bacteroides forsythus).